Reading from the N-terminus, the 192-residue chain is GTP cyclohydrolase-2 (192 aa).

47–51 lines the GTP pocket; the sequence is RIHSE. 3 residues coordinate Zn(2+): Cys52, Cys63, and Cys65. GTP is bound by residues Gln68, 90-92, and Thr112; that span reads EGR. The active-site Proton acceptor is the Asp124. Arg126 serves as the catalytic Nucleophile. Thr147 and Lys152 together coordinate GTP.

It belongs to the GTP cyclohydrolase II family. It depends on Zn(2+) as a cofactor.

The catalysed reaction is GTP + 4 H2O = 2,5-diamino-6-hydroxy-4-(5-phosphoribosylamino)-pyrimidine + formate + 2 phosphate + 3 H(+). It participates in cofactor biosynthesis; riboflavin biosynthesis; 5-amino-6-(D-ribitylamino)uracil from GTP: step 1/4. In terms of biological role, catalyzes the conversion of GTP to 2,5-diamino-6-ribosylamino-4(3H)-pyrimidinone 5'-phosphate (DARP), formate and pyrophosphate. In Picrophilus torridus (strain ATCC 700027 / DSM 9790 / JCM 10055 / NBRC 100828 / KAW 2/3), this protein is GTP cyclohydrolase-2.